Here is a 458-residue protein sequence, read N- to C-terminus: tRNA modification GTPase MnmE (458 aa).

(6S)-5-formyl-5,6,7,8-tetrahydrofolate-binding residues include R26, E88, and R127. In terms of domain architecture, TrmE-type G spans 224–378 (GLSTAIIGRP…IEDRINQLFF (155 aa)). A K(+)-binding site is contributed by N234. Residues 234–239 (NVGKSS), 253–259 (TDIAGTT), and 278–281 (DTAG) each bind GTP. S238 contributes to the Mg(2+) binding site. Residues T253, I255, and T258 each contribute to the K(+) site. T259 contacts Mg(2+). Position 458 (K458) interacts with (6S)-5-formyl-5,6,7,8-tetrahydrofolate.

The protein belongs to the TRAFAC class TrmE-Era-EngA-EngB-Septin-like GTPase superfamily. TrmE GTPase family. In terms of assembly, homodimer. Heterotetramer of two MnmE and two MnmG subunits. K(+) is required as a cofactor.

It localises to the cytoplasm. In terms of biological role, exhibits a very high intrinsic GTPase hydrolysis rate. Involved in the addition of a carboxymethylaminomethyl (cmnm) group at the wobble position (U34) of certain tRNAs, forming tRNA-cmnm(5)s(2)U34. This Streptococcus pyogenes serotype M1 protein is tRNA modification GTPase MnmE.